The chain runs to 546 residues: Coatomer subunit delta (546 aa).

Positions 190–440 (NRFMGSKDPN…VIFTIPVFPQ (251 aa)) are interaction with DSL1. The segment at 236-287 (PMATSQRAGHSATGGMKLGGGAGRRAGAAPRPSAISSASSGTPPPPEEDVPE) is disordered. Low complexity predominate over residues 260-276 (RAGAAPRPSAISSASSG). A Phosphothreonine modification is found at threonine 277. The MHD domain maps to 288–546 (NNGILISIKE…SLKSDEYLVQ (259 aa)).

Belongs to the adaptor complexes medium subunit family. Delta-COP subfamily. In terms of assembly, oligomeric complex that consists of at least the alpha, beta, beta', gamma, delta, epsilon and zeta subunits. Interacts with DSL1.

The protein localises to the cytoplasm. Its subcellular location is the golgi apparatus membrane. It localises to the cytoplasmic vesicle. The protein resides in the COPI-coated vesicle membrane. Its function is as follows. The coatomer is a cytosolic protein complex that binds to dilysine motifs and reversibly associates with Golgi non-clathrin-coated vesicles, which further mediate biosynthetic protein transport from the ER, via the Golgi up to the trans Golgi network. Coatomer complex is required for budding from Golgi membranes, and is essential for the retrograde Golgi-to-ER transport of dilysine-tagged proteins. The polypeptide is Coatomer subunit delta (RET2) (Saccharomyces cerevisiae (strain ATCC 204508 / S288c) (Baker's yeast)).